Consider the following 454-residue polypeptide: Type II methyltransferase M.MvaI (454 aa).

This sequence belongs to the N(4)/N(6)-methyltransferase family. N(4) subfamily.

It carries out the reaction a 2'-deoxycytidine in DNA + S-adenosyl-L-methionine = an N(4)-methyl-2'-deoxycytidine in DNA + S-adenosyl-L-homocysteine + H(+). Its function is as follows. An alpha subtype methylase, recognizes the double-stranded sequence 5'-CCWGG-3', methylatES C-2 on both strands, and protects the DNA from cleavage by the MvaI endonuclease. The polypeptide is Type II methyltransferase M.MvaI (Kocuria varians (Micrococcus varians)).